We begin with the raw amino-acid sequence, 190 residues long: Potassium-transporting ATPase KdpC subunit (190 aa).

A helical transmembrane segment spans residues 13–33 (VGFLLLTLMCGVVYPGIVTIF).

It belongs to the KdpC family. The system is composed of three essential subunits: KdpA, KdpB and KdpC.

The protein localises to the cell membrane. Its function is as follows. Part of the high-affinity ATP-driven potassium transport (or Kdp) system, which catalyzes the hydrolysis of ATP coupled with the electrogenic transport of potassium into the cytoplasm. This subunit acts as a catalytic chaperone that increases the ATP-binding affinity of the ATP-hydrolyzing subunit KdpB by the formation of a transient KdpB/KdpC/ATP ternary complex. The chain is Potassium-transporting ATPase KdpC subunit from Listeria monocytogenes serotype 4b (strain CLIP80459).